Reading from the N-terminus, the 316-residue chain is Thymidylate synthase (316 aa).

DUMP-binding positions include arginine 23 and 178–179 (RR). The active-site Nucleophile is the cysteine 198. Residues 218-221 (RSGD), asparagine 229, and 259-261 (HIY) each bind dUMP. Aspartate 221 lines the (6R)-5,10-methylene-5,6,7,8-tetrahydrofolate pocket. Alanine 315 lines the (6R)-5,10-methylene-5,6,7,8-tetrahydrofolate pocket.

This sequence belongs to the thymidylate synthase family. Bacterial-type ThyA subfamily. In terms of assembly, homodimer.

The protein resides in the cytoplasm. It carries out the reaction dUMP + (6R)-5,10-methylene-5,6,7,8-tetrahydrofolate = 7,8-dihydrofolate + dTMP. It participates in pyrimidine metabolism; dTTP biosynthesis. Functionally, catalyzes the reductive methylation of 2'-deoxyuridine-5'-monophosphate (dUMP) to 2'-deoxythymidine-5'-monophosphate (dTMP) while utilizing 5,10-methylenetetrahydrofolate (mTHF) as the methyl donor and reductant in the reaction, yielding dihydrofolate (DHF) as a by-product. This enzymatic reaction provides an intracellular de novo source of dTMP, an essential precursor for DNA biosynthesis. The polypeptide is Thymidylate synthase (Pediococcus pentosaceus (strain ATCC 25745 / CCUG 21536 / LMG 10740 / 183-1w)).